The primary structure comprises 201 residues: Pyrrolidone-carboxylate peptidase (201 aa).

Residues glutamate 78, cysteine 141, and histidine 165 contribute to the active site.

It belongs to the peptidase C15 family. In terms of assembly, homotetramer.

Its subcellular location is the cytoplasm. The catalysed reaction is Release of an N-terminal pyroglutamyl group from a polypeptide, the second amino acid generally not being Pro.. Its function is as follows. Removes 5-oxoproline from various penultimate amino acid residues except L-proline. The chain is Pyrrolidone-carboxylate peptidase from Brachyspira hyodysenteriae (strain ATCC 49526 / WA1).